Here is a 256-residue protein sequence, read N- to C-terminus: Large ribosomal subunit protein bL21c (256 aa).

The transit peptide at 1–55 (MASATLAFSCSSLCATLKLPQNLNPLLLNVPPLSKPFSGVVSPPSLSRLSLLPVA) directs the protein to the chloroplast.

Component of the chloroplast large ribosomal subunit (LSU). Mature 70S chloroplast ribosomes of higher plants consist of a small (30S) and a large (50S) subunit. The 30S small subunit contains 1 molecule of ribosomal RNA (16S rRNA) and 24 different proteins. The 50S large subunit contains 3 rRNA molecules (23S, 5S and 4.5S rRNA) and 33 different proteins.

The protein resides in the plastid. It is found in the chloroplast. Its function is as follows. Component of the chloroplast ribosome (chloro-ribosome), a dedicated translation machinery responsible for the synthesis of chloroplast genome-encoded proteins, including proteins of the transcription and translation machinery and components of the photosynthetic apparatus. The chain is Large ribosomal subunit protein bL21c (RPL21) from Spinacia oleracea (Spinach).